The sequence spans 278 residues: 4-hydroxy-tetrahydrodipicolinate reductase (278 aa).

NAD(+) is bound by residues 13–18 (GAAGKM) and 111–113 (GTT). His-167 serves as the catalytic Proton donor/acceptor. Residue His-168 coordinates (S)-2,3,4,5-tetrahydrodipicolinate. Residue Lys-171 is the Proton donor of the active site. (S)-2,3,4,5-tetrahydrodipicolinate is bound at residue 177-178 (GT).

Belongs to the DapB family.

It is found in the cytoplasm. It carries out the reaction (S)-2,3,4,5-tetrahydrodipicolinate + NAD(+) + H2O = (2S,4S)-4-hydroxy-2,3,4,5-tetrahydrodipicolinate + NADH + H(+). The enzyme catalyses (S)-2,3,4,5-tetrahydrodipicolinate + NADP(+) + H2O = (2S,4S)-4-hydroxy-2,3,4,5-tetrahydrodipicolinate + NADPH + H(+). It functions in the pathway amino-acid biosynthesis; L-lysine biosynthesis via DAP pathway; (S)-tetrahydrodipicolinate from L-aspartate: step 4/4. Catalyzes the conversion of 4-hydroxy-tetrahydrodipicolinate (HTPA) to tetrahydrodipicolinate. This is 4-hydroxy-tetrahydrodipicolinate reductase from Nostoc sp. (strain PCC 7120 / SAG 25.82 / UTEX 2576).